We begin with the raw amino-acid sequence, 911 residues long: MMKPASLQGFSSHASSSIYSDVRRPATTPSKMAAFSALSLCPYTFTFRQSSRIKSTVSCSVTSAPASGTSSSSKTPRRRSGRLEGVGKSMEDSVKRKMEQFYEGTDGPPLRILPIGGLGEIGMNCMLVGNYDRYILIDAGIMFPDYDEPGIQKIMPDTGFIRRWKHKIEAVVITHGHEDHIGALPWVIPALDPNTPIFASSFTMELIKKRLKEHGIFVQSRLKTFSTRRRFMAGPFEIEPITVTHSIPDCSGLFLRCADGNILHTGDWKIDEAPLDGKVFDREALEELSKEGVTLMMSDSTNVLSPGRTISEKVVADALVRNVMAAKGRVITTQFASNIHRLGSIKAAADITGRKLVFVGMSLRTYLEAAWRDGKAPIDPSSLIKVEDIEAYAPKDLLIVTTGSQAEPRAALNLASYGSSHAFKLTKEDIILYSAKVIPGNESRVMKMMNRIADIGPNIIMGKNEMLHTSGHAYRGELEEVLKIVKPQHFLPIHGELLFLKEHELLGKSTGIRHTTVIKNGEMLGVSHLRNRRVLSNGFSSLGRENLQLMYSDGDKAFGTSSELCIDERLRISSDGIIVLSMEIMRPGVSENTLKGKIRITTRCMWLDKGRLLDALHKAAHAALSSCPVTCPLSHMERTVSEVLRKIVRKYSGKRPEVIAIATENPMAVRADEVSARLSGDPSVGSGVAALRKVVEGNDKRSRAKKAPSQEASPKEVDRTLEDDIIDSARLLAEEETAASTYTEEVDTPVGSSSEESDDFWKSFINPSSSPSPSETENMNKVADTEPKAEGKENSRDDDELADASDSETKSSPKRVRKNKWKPEEIKKVIRMRGELHSRFQVVKGRMALWEEISSNLSAEGINRSPGQCKSLWASLIQKYEESKADERSKTSWPHFEDMNNILSELGTPAS.

The transit peptide at 1–70 (MMKPASLQGF…VTSAPASGTS (70 aa)) directs the protein to the chloroplast. A disordered region spans residues 58–90 (SCSVTSAPASGTSSSSKTPRRRSGRLEGVGKSM). Low complexity predominate over residues 63 to 74 (SAPASGTSSSSK). Residues H175, H177, D179, H180, H245, and D267 each contribute to the Zn(2+) site. Substrate contacts are provided by residues 336-338 (ASN) and 468-472 (HTSGH). A Zn(2+)-binding site is contributed by H494. Disordered regions lie at residues 695–723 (VEGN…TLED) and 735–824 (EETA…WKPE). Composition is skewed to basic and acidic residues over residues 713–722 (SPKEVDRTLE) and 783–795 (ADTE…KENS). The span at 796–806 (RDDDELADASD) shows a compositional bias: acidic residues. Residues 813-877 (PKRVRKNKWK…QCKSLWASLI (65 aa)) form the Myb-like domain.

Belongs to the metallo-beta-lactamase superfamily. RNA-metabolizing metallo-beta-lactamase-like family. Bacterial RNase J subfamily. As to quaternary structure, homodimer. May be a subunit of the RNA degradosome. It depends on Zn(2+) as a cofactor. In terms of tissue distribution, moslty expressed in inflorescences, seedlings, leaves, flowers and flower buds, and, to a lower extent, in stems, siliques and roots.

The protein resides in the plastid. It is found in the chloroplast. Functionally, essential protein required during embryogenesis, especially in initiating and maintaining the organization of shoot apical meristems (SAMs), cotyledons, and hypocotyls. Involved in auxin-mediated pathways during embryogenesis. RNase that has both endonuclease and 5'-3' exonuclease activities. Involved in RNA surveillance to prevent overaccumulation of antisense RNA. Probably involved in maturation of rRNA and in some organisms also mRNA maturation and/or decay. This Arabidopsis thaliana (Mouse-ear cress) protein is Ribonuclease J.